The chain runs to 247 residues: Caffeoyl-CoA O-methyltransferase (247 aa).

Residue Lys21 coordinates substrate. Residues Thr63, Glu85, 87-88, Ser93, Asp111, and Ala140 each bind S-adenosyl-L-methionine; that span reads GV. Asp163 contacts substrate. A divalent metal cation is bound at residue Asp163. Asp165 contributes to the S-adenosyl-L-methionine binding site. A divalent metal cation contacts are provided by Asp189 and Asn190. Asn194 contacts substrate.

Belongs to the class I-like SAM-binding methyltransferase superfamily. Cation-dependent O-methyltransferase family. CCoAMT subfamily. Homodimer. Ca(2+) serves as cofactor. It depends on Mg(2+) as a cofactor. Zn(2+) is required as a cofactor.

It carries out the reaction (E)-caffeoyl-CoA + S-adenosyl-L-methionine = (E)-feruloyl-CoA + S-adenosyl-L-homocysteine + H(+). Its pathway is aromatic compound metabolism; phenylpropanoid biosynthesis. Functionally, methylates caffeoyl-CoA to feruloyl-CoA and 5-hydroxyferuloyl-CoA to sinapoyl-CoA. Plays a role in the synthesis of feruloylated polysaccharides. Involved in the reinforcement of the plant cell wall. Also involved in the responding to wounding or pathogen challenge by the increased formation of cell wall-bound ferulic acid polymers. The polypeptide is Caffeoyl-CoA O-methyltransferase (CCOMT) (Medicago sativa (Alfalfa)).